The sequence spans 463 residues: Elongation factor 1-alpha 2 (463 aa).

N,N,N-trimethylglycine is present on G2. In terms of domain architecture, tr-type G spans 5-242 (KTHINIVVIG…DTILPPTRPT (238 aa)). Residues 14–21 (GHVDSGKS) form a G1 region. Positions 17, 18, 19, 20, 21, and 22 each coordinate GTP. Position 17 (D17) interacts with Mg(2+). At K36 the chain carries N6,N6,N6-trimethyllysine; alternate. K36 bears the N6,N6-dimethyllysine; alternate mark. K36 carries the N6-methyllysine; alternate modification. The residue at position 55 (K55) is an N6,N6,N6-trimethyllysine. N6,N6-dimethyllysine is present on K55. The G2 stretch occupies residues 70–74 (GITID). The residue at position 79 (K79) is an N6,N6,N6-trimethyllysine. Positions 91-94 (DAPG) are G3. Residues N153, K154, and D156 each contribute to the GTP site. Residues 153 to 156 (NKMD) form a G4 region. The residue at position 163 (S163) is a Phosphoserine. K165 carries the post-translational modification N6,N6-dimethyllysine; alternate. K165 is subject to N6-methyllysine; alternate. At K165 the chain carries N6,N6,N6-trimethyllysine; alternate; by EEF1AKMT3. An N6-acetyllysine modification is found at K179. S194, G195, and W196 together coordinate GTP. The interval 194–196 (SGW) is G5. S224 bears the Phosphoserine mark. At T239 the chain carries Phosphothreonine. 5-glutamyl glycerylphosphorylethanolamine occurs at positions 301 and 374. N6-acetyllysine is present on K439. Residues 444–463 (KSGGAGKVTKSAQKAQKAGK) are disordered.

This sequence belongs to the TRAFAC class translation factor GTPase superfamily. Classic translation factor GTPase family. EF-Tu/EF-1A subfamily. In terms of assembly, homodimer; arranged in a 'head to tail' dimer configuration. Post-translationally, trimethylated at Lys-165 by EEF1AKMT3. Mono-, di-, and trimethylated at Lys-36 by EEF1AKMT4; trimethylated form is predominant. Methylation by EEF1AKMT4 contributes to the fine-tuning of translation rates for a subset of tRNAs. Trimethylated at the N-terminus and dimethylated at Lys-55 by METTL13.

The protein localises to the endoplasmic reticulum membrane. The catalysed reaction is GTP + H2O = GDP + phosphate + H(+). Functionally, translation elongation factor that catalyzes the GTP-dependent binding of aminoacyl-tRNA (aa-tRNA) to the A-site of ribosomes during the elongation phase of protein synthesis. Base pairing between the mRNA codon and the aa-tRNA anticodon promotes GTP hydrolysis, releasing the aa-tRNA from EEF1A1 and allowing its accommodation into the ribosome. The growing protein chain is subsequently transferred from the P-site peptidyl tRNA to the A-site aa-tRNA, extending it by one amino acid through ribosome-catalyzed peptide bond formation. The chain is Elongation factor 1-alpha 2 (EEF1A2) from Bos taurus (Bovine).